A 316-amino-acid polypeptide reads, in one-letter code: Pantothenate kinase (316 aa).

Residue 95-102 participates in ATP binding; sequence GSVSVGKS.

The protein belongs to the prokaryotic pantothenate kinase family.

It localises to the cytoplasm. It carries out the reaction (R)-pantothenate + ATP = (R)-4'-phosphopantothenate + ADP + H(+). It participates in cofactor biosynthesis; coenzyme A biosynthesis; CoA from (R)-pantothenate: step 1/5. This Actinobacillus pleuropneumoniae serotype 7 (strain AP76) protein is Pantothenate kinase.